A 150-amino-acid polypeptide reads, in one-letter code: FAD synthase (150 aa).

ATP-binding positions include 11–12 (TF), 16–19 (HPGH), Asp96, and Tyr124.

The protein belongs to the archaeal FAD synthase family. Homodimer. Requires a divalent metal cation as cofactor.

It catalyses the reaction FMN + ATP + H(+) = FAD + diphosphate. It participates in cofactor biosynthesis; FAD biosynthesis; FAD from FMN: step 1/1. In terms of biological role, catalyzes the transfer of the AMP portion of ATP to flavin mononucleotide (FMN) to produce flavin adenine dinucleotide (FAD) coenzyme. This Methanococcus maripaludis (strain C5 / ATCC BAA-1333) protein is FAD synthase.